A 298-amino-acid chain; its full sequence is UDP-3-O-acyl-N-acetylglucosamine deacetylase (298 aa).

Histidine 80, histidine 239, and aspartate 243 together coordinate Zn(2+). Histidine 266 serves as the catalytic Proton donor.

It belongs to the LpxC family. It depends on Zn(2+) as a cofactor.

It carries out the reaction a UDP-3-O-[(3R)-3-hydroxyacyl]-N-acetyl-alpha-D-glucosamine + H2O = a UDP-3-O-[(3R)-3-hydroxyacyl]-alpha-D-glucosamine + acetate. It functions in the pathway glycolipid biosynthesis; lipid IV(A) biosynthesis; lipid IV(A) from (3R)-3-hydroxytetradecanoyl-[acyl-carrier-protein] and UDP-N-acetyl-alpha-D-glucosamine: step 2/6. Its function is as follows. Catalyzes the hydrolysis of UDP-3-O-myristoyl-N-acetylglucosamine to form UDP-3-O-myristoylglucosamine and acetate, the committed step in lipid A biosynthesis. This chain is UDP-3-O-acyl-N-acetylglucosamine deacetylase, found in Blochmanniella floridana.